The sequence spans 296 residues: GTPase Era (296 aa).

In terms of domain architecture, Era-type G spans 3–170 (KSGFVTIVGR…KELMFKYIPE (168 aa)). A G1 region spans residues 11 to 18 (GRPNVGKS). 11 to 18 (GRPNVGKS) is a binding site for GTP. The segment at 37-41 (QTTRN) is G2. The interval 58–61 (DTPG) is G3. GTP is bound by residues 58–62 (DTPGI) and 120–123 (NKID). Residues 120-123 (NKID) form a G4 region. Positions 149–151 (ISA) are G5. A KH type-2 domain is found at 201–278 (LSEEVPHGIA…YIRLWVKVKE (78 aa)).

It belongs to the TRAFAC class TrmE-Era-EngA-EngB-Septin-like GTPase superfamily. Era GTPase family. In terms of assembly, monomer.

Its subcellular location is the cytoplasm. It localises to the cell membrane. In terms of biological role, an essential GTPase that binds both GDP and GTP, with rapid nucleotide exchange. Plays a role in 16S rRNA processing and 30S ribosomal subunit biogenesis and possibly also in cell cycle regulation and energy metabolism. This Clostridium botulinum (strain Loch Maree / Type A3) protein is GTPase Era.